Here is a 194-residue protein sequence, read N- to C-terminus: Naphthalene 1,2-dioxygenase system, small oxygenase component (194 aa).

Belongs to the bacterial ring-hydroxylating dioxygenase beta subunit family. As to quaternary structure, the naphthalene dioxygenase (NDO) multicomponent enzyme system is composed of an electron transfer component and a dioxygenase component (iron sulfur protein (ISP)). The electron transfer component is composed of a ferredoxin reductase (NagAa) and a ferredoxin (NagAb), and the dioxygenase component is formed by a large alpha subunit (NagAc) and a small beta subunit (NagAd).

It participates in aromatic compound metabolism; naphthalene degradation. Its function is as follows. Component of the naphthalene dioxygenase (NDO) multicomponent enzyme system which catalyzes the incorporation of both atoms of molecular oxygen into naphthalene to form cis-(1R,2S)-dihydroxy-1,2-dihydronaphthalene. Also able to use styrene as substrate. The beta subunit seems to have a structural role in the holoenzyme. In Ralstonia sp, this protein is Naphthalene 1,2-dioxygenase system, small oxygenase component.